The primary structure comprises 195 residues: MEKFTVHTGRAVPLRYSNVDTDQIIPAVYLKRVTRTGFEDGLFAAWRTDPDFVLNKPEYKDGTILIAGPDFGTGSSREHAVWALQNYGFKAVLSSRFADIFRGNSLKGGLLTVVLPQPVIEQLWEMVEADPATEITVDLVNREVRAKDIVEPFELDDYTRWRLMEGLDDIDLTLRHVDAIAEYEKRRKPWLPVTQ.

It belongs to the LeuD family. LeuD type 1 subfamily. In terms of assembly, heterodimer of LeuC and LeuD.

The catalysed reaction is (2R,3S)-3-isopropylmalate = (2S)-2-isopropylmalate. Its pathway is amino-acid biosynthesis; L-leucine biosynthesis; L-leucine from 3-methyl-2-oxobutanoate: step 2/4. In terms of biological role, catalyzes the isomerization between 2-isopropylmalate and 3-isopropylmalate, via the formation of 2-isopropylmaleate. The polypeptide is 3-isopropylmalate dehydratase small subunit (Thermobifida fusca (strain YX)).